Reading from the N-terminus, the 568-residue chain is Potassium-transporting ATPase potassium-binding subunit (568 aa).

10 helical membrane-spanning segments follow: residues 3 to 23 (TEIL…YPLG), 64 to 84 (FLKA…VLLV), 133 to 153 (FVIM…MAGI), 179 to 199 (ILLP…TPMG), 255 to 275 (MVEC…LGFY), 281 to 301 (LAYS…CINV), 375 to 395 (FGGV…AVFI), 418 to 438 (IATI…AISS), 497 to 517 (IVLI…AGLL), and 536 to 556 (TFGI…FFPV).

The protein belongs to the KdpA family. As to quaternary structure, the system is composed of three essential subunits: KdpA, KdpB and KdpC.

It localises to the cell inner membrane. Its function is as follows. Part of the high-affinity ATP-driven potassium transport (or Kdp) system, which catalyzes the hydrolysis of ATP coupled with the electrogenic transport of potassium into the cytoplasm. This subunit binds the periplasmic potassium ions and delivers the ions to the membrane domain of KdpB through an intramembrane tunnel. This chain is Potassium-transporting ATPase potassium-binding subunit, found in Bacteroides thetaiotaomicron (strain ATCC 29148 / DSM 2079 / JCM 5827 / CCUG 10774 / NCTC 10582 / VPI-5482 / E50).